The primary structure comprises 323 residues: tRNA dimethylallyltransferase (323 aa).

Gly-12–Thr-19 is an ATP binding site. Position 14 to 19 (Thr-14 to Thr-19) interacts with substrate. Interaction with substrate tRNA regions lie at residues Asp-37–Leu-40 and Gln-161–Arg-165.

This sequence belongs to the IPP transferase family. As to quaternary structure, monomer. Requires Mg(2+) as cofactor.

It catalyses the reaction adenosine(37) in tRNA + dimethylallyl diphosphate = N(6)-dimethylallyladenosine(37) in tRNA + diphosphate. Functionally, catalyzes the transfer of a dimethylallyl group onto the adenine at position 37 in tRNAs that read codons beginning with uridine, leading to the formation of N6-(dimethylallyl)adenosine (i(6)A). The protein is tRNA dimethylallyltransferase of Azotobacter vinelandii (strain DJ / ATCC BAA-1303).